Reading from the N-terminus, the 638-residue chain is 1-deoxy-D-xylulose-5-phosphate synthase (638 aa).

Residues histidine 71 and 112-114 (SHA) contribute to the thiamine diphosphate site. Aspartate 144 contributes to the Mg(2+) binding site. Thiamine diphosphate contacts are provided by residues 145–146 (GA), asparagine 173, tyrosine 284, and glutamate 365. Residue asparagine 173 coordinates Mg(2+).

It belongs to the transketolase family. DXPS subfamily. As to quaternary structure, homodimer. Mg(2+) serves as cofactor. It depends on thiamine diphosphate as a cofactor.

The enzyme catalyses D-glyceraldehyde 3-phosphate + pyruvate + H(+) = 1-deoxy-D-xylulose 5-phosphate + CO2. It functions in the pathway metabolic intermediate biosynthesis; 1-deoxy-D-xylulose 5-phosphate biosynthesis; 1-deoxy-D-xylulose 5-phosphate from D-glyceraldehyde 3-phosphate and pyruvate: step 1/1. Its function is as follows. Catalyzes the acyloin condensation reaction between C atoms 2 and 3 of pyruvate and glyceraldehyde 3-phosphate to yield 1-deoxy-D-xylulose-5-phosphate (DXP). The polypeptide is 1-deoxy-D-xylulose-5-phosphate synthase (Mycobacterium sp. (strain KMS)).